The following is a 377-amino-acid chain: tRNA-splicing endonuclease subunit SEN2 (377 aa).

Positions 119-174 form a coiled coil; sequence ETEMTLEKVTQQRRLQRLEFKKERAKLERELLELRKKGGHIDEENILLEKQRESLR. Catalysis depends on residues tyrosine 289, histidine 297, and lysine 328.

This sequence belongs to the tRNA-intron endonuclease family. In terms of assembly, heterotetramer composed of SEN2, SEN15, SEN34 and SEN54. Interacts directly with SEN54.

The protein localises to the nucleus. Its subcellular location is the endomembrane system. It localises to the mitochondrion outer membrane. It catalyses the reaction pretRNA = a 3'-half-tRNA molecule with a 5'-OH end + a 5'-half-tRNA molecule with a 2',3'-cyclic phosphate end + an intron with a 2',3'-cyclic phosphate and a 5'-hydroxyl terminus.. Its function is as follows. Constitutes one of the two catalytic subunit of the tRNA-splicing endonuclease complex, a complex responsible for identification and cleavage of the splice sites in pre-tRNA. It cleaves pre-tRNA at the 5'- and 3'-splice sites to release the intron. The products are an intron and two tRNA half-molecules bearing 2',3'-cyclic phosphate and 5'-OH termini. There are no conserved sequences at the splice sites, but the intron is invariably located at the same site in the gene, placing the splice sites an invariant distance from the constant structural features of the tRNA body. This subunit may anchor the endonuclease complex to the nuclear membrane. Probably carries the active site for 5'-splice site cleavage. This is tRNA-splicing endonuclease subunit SEN2 (SEN2) from Saccharomyces cerevisiae (strain ATCC 204508 / S288c) (Baker's yeast).